Reading from the N-terminus, the 79-residue chain is Succinate dehydrogenase assembly factor 1, mitochondrial (79 aa).

It belongs to the complex I LYR family. SDHAF1 subfamily. Interacts with sdh2 within an sdh1-sdh2 subcomplex.

It localises to the mitochondrion matrix. In terms of biological role, plays an essential role in the assembly of succinate dehydrogenase (SDH), an enzyme complex (also referred to as respiratory complex II) that is a component of both the tricarboxylic acid (TCA) cycle and the mitochondrial electron transport chain, and which couples the oxidation of succinate to fumarate with the reduction of ubiquinone (coenzyme Q) to ubiquinol. Promotes maturation of the iron-sulfur protein subunit sdh2 of the SDH catalytic dimer, protecting it from the deleterious effects of oxidants. May act together with SDHAF3. This chain is Succinate dehydrogenase assembly factor 1, mitochondrial, found in Schizosaccharomyces pombe (strain 972 / ATCC 24843) (Fission yeast).